A 239-amino-acid polypeptide reads, in one-letter code: uncharacterized protein (239 aa).

This sequence belongs to the initiator RepB protein family.

Its function is as follows. Mutations in ORF 239 affects the incN plasmid pUC1 E.coli polA-independence but not its autonomous replication ability. This is an uncharacterized protein from Escherichia coli.